A 408-amino-acid chain; its full sequence is CinA-like protein (408 aa).

Belongs to the CinA family.

This chain is CinA-like protein, found in Thermotoga sp. (strain RQ2).